Here is an 834-residue protein sequence, read N- to C-terminus: Enhancer of filamentation 1 (834 aa).

Residues methionine 1–aspartate 505 are required for interaction with ITCH. The SH3 domain occupies tyrosine 3–glycine 65. Phosphotyrosine; by ABL1 is present on residues tyrosine 92, tyrosine 164, tyrosine 166, tyrosine 177, tyrosine 189, tyrosine 214, and tyrosine 223. An interacts strongly with spindle-regulatory protein D1M1 region spans residues arginine 102–alanine 229. Residues glutamate 238–valine 260 form a disordered region. Tyrosine 279 is modified (phosphotyrosine; by ABL1). A disordered region spans residues alanine 291–alanine 316. Serine 296 bears the Phosphoserine mark. Polar residues predominate over residues leucine 306–aspartate 315. Residue tyrosine 317 is modified to Phosphotyrosine; by ABL1. Disordered stretches follow at residues proline 328–glutamine 398 and glycine 560–arginine 623. Positions threonine 332–valine 344 are enriched in basic and acidic residues. Residues asparagine 351–phenylalanine 834 are interacts with CTTN. Positions aspartate 360–aspartate 363 match the Caspase cleavage related site motif. The residue at position 369 (serine 369) is a Phosphoserine. A compositionally biased stretch (low complexity) spans serine 369–serine 395. The interval phenylalanine 710 to glycine 760 is divergent helix-loop-helix motif. The tract at residues phenylalanine 710–phenylalanine 834 is required for interaction with PLK1. Serine 780 is modified (phosphoserine; by CSNK1D and CSNK1E). Threonine 804 is subject to Phosphothreonine; by CSNK1E.

The protein belongs to the CAS family. As to quaternary structure, homodimer. Forms heterodimers with BCAR1/p130cas. Forms complexes with PTK2B/RAFTK, adapter protein CRKL and LYN kinase. Part of a complex composed of NEDD9, AURKA and CTTN; within the complex NEDD9 acts as a scaffold protein and is required for complex formation. Part of a ternary complex composed of SMAD3, ITCH/AIP4 and NEDD9/HEF1; within the complex NEDD9/HEF1 interacts (via N-terminus) with ITCH/AIP4 (via WW domains); the complex mediates ubiquitination and proteasomal degradation of NEDD9/HEF1. Interacts with SMAD3; the interaction promotes NEDD9 ubiquitination and proteasomal degradation. Interacts with ID2. Interacts with CTTN (via N-terminus). Interacts with MICAL. Interacts with TXNL4/DIM1. Interacts with BCAR3 (via Ras-GEF domain). Interacts with SH2D3C isoform 1 and isoform 2. Interacts with ECT2. Interacts with PTPN11/SHP-2 (via SH2 domains); the interaction is enhanced when NEDD9/CAS-L is tyrosine phosphorylated. Interacts (via C-terminus) with PLK1 (via polo box domains). Interacts with NKX2-5. Interacts with SMAD3; the interaction is inhibited by oxidation of NEDD9. Interacts with NEDD9/HEF1; interaction is induced by CXCL12 promotion of ABL-mediated phosphorylation of NEDD9/HEF1. Interacts (via SH3 domain) with PTK2/FAK. Interacts with FYN; in the presence of PTK2. Interacts with INPPL1/SHIP2. Cell cycle-regulated processing produces four isoforms: p115, p105, p65, and p55. Isoform p115 arises from p105 phosphorylation and appears later in the cell cycle. Isoform p55 arises from p105 as a result of cleavage at a caspase cleavage-related site and it appears specifically at mitosis. The p65 isoform is poorly detected. In terms of processing, polyubiquitinated by ITCH/AIP4, leading to proteasomal degradation. Post-translationally, PTK2/FAK1 phosphorylates the protein at the YDYVHL motif (conserved among all cas proteins) following integrin stimulation. The SRC family kinases (FYN, SRC, LCK and CRK) are recruited to the phosphorylated sites and can phosphorylate other tyrosine residues. Ligation of either integrin beta-1 or B-cell antigen receptor on tonsillar B-cells and B-cell lines promotes tyrosine phosphorylation and both integrin and BCR-mediated tyrosine phosphorylation requires an intact actin network. Phosphorylation is required to recruit NEDD9 to T-cell receptor microclusters at the periphery of newly formed immunological synapses. In fibroblasts transformation with oncogene v-ABL results in an increase in tyrosine phosphorylation. Transiently phosphorylated following CD3 cross-linking and this phosphorylated form binds to CRKL and C3G. A mutant lacking the SH3 domain is phosphorylated upon CD3 cross-linking but not upon integrin beta-1 cross-linking. Tyrosine phosphorylation occurs upon stimulation of the G-protein coupled C1a calcitonin receptor. Calcitonin-stimulated tyrosine phosphorylation is mediated by calcium- and protein kinase C-dependent mechanisms and requires the integrity of the actin cytoskeleton. Phosphorylation at Ser-369 induces proteasomal degradation. Phosphorylated by LYN. Phosphorylation at Ser-780 by CSNK1D or CSNK1E, or phosphorylation of Thr-804 by CSNK1E enhances the interaction of NEDD9 with PLK1. Expressed in B-cells (at protein level). Expressed in the respiratory epithelium of the main bronchi to the bronchioles in the lungs (at protein level). High levels detected in kidney, lung, and placenta. Expressed in lymphocytes.

It is found in the cytoplasm. It localises to the cell cortex. The protein localises to the nucleus. Its subcellular location is the golgi apparatus. The protein resides in the cell projection. It is found in the lamellipodium. It localises to the cell junction. The protein localises to the focal adhesion. Its subcellular location is the cytoskeleton. The protein resides in the spindle pole. It is found in the cilium. It localises to the cilium basal body. The protein localises to the basolateral cell membrane. Its subcellular location is the spindle. Functionally, scaffolding protein which plays a central coordinating role for tyrosine-kinase-based signaling related to cell adhesion. As a focal adhesion protein, plays a role in embryonic fibroblast migration. May play an important role in integrin beta-1 or B cell antigen receptor (BCR) mediated signaling in B- and T-cells. Integrin beta-1 stimulation leads to recruitment of various proteins including CRKL and SHPTP2 to the tyrosine phosphorylated form. Promotes adhesion and migration of lymphocytes; as a result required for the correct migration of lymphocytes to the spleen and other secondary lymphoid organs. Plays a role in the organization of T-cell F-actin cortical cytoskeleton and the centralization of T-cell receptor microclusters at the immunological synapse. Negatively regulates cilia outgrowth in polarized cysts. Modulates cilia disassembly via activation of AURKA-mediated phosphorylation of HDAC6 and subsequent deacetylation of alpha-tubulin. Positively regulates RANKL-induced osteoclastogenesis. Required for the maintenance of hippocampal dendritic spines in the dentate gyrus and CA1 regions, thereby involved in spatial learning and memory. The sequence is that of Enhancer of filamentation 1 from Homo sapiens (Human).